The primary structure comprises 331 residues: Tyrosine--tRNA ligase (331 aa).

Positions 31, 155, 159, 162, and 177 each coordinate L-tyrosine. The 'KMSKS' region signature appears at 218–222 (KMSKS). Position 221 (Lys221) interacts with ATP.

The protein belongs to the class-I aminoacyl-tRNA synthetase family. TyrS type 4 subfamily. Homodimer.

It localises to the cytoplasm. The catalysed reaction is tRNA(Tyr) + L-tyrosine + ATP = L-tyrosyl-tRNA(Tyr) + AMP + diphosphate + H(+). Catalyzes the attachment of tyrosine to tRNA(Tyr) in a two-step reaction: tyrosine is first activated by ATP to form Tyr-AMP and then transferred to the acceptor end of tRNA(Tyr). In Thermoplasma volcanium (strain ATCC 51530 / DSM 4299 / JCM 9571 / NBRC 15438 / GSS1), this protein is Tyrosine--tRNA ligase.